A 750-amino-acid chain; its full sequence is Elastin (750 aa).

The N-terminal stretch at 1-24 (ARQAAAPLLPGVLLLFSILPASQQ) is a signal peptide. Residues proline 32, proline 67, proline 102, proline 176, proline 189, proline 192, and proline 211 each carry the 4-hydroxyproline modification. The stretch at 83-127 (GAGVGGLGAGLGAFPGAAFPGAASAAALKAAAKAGAGLGGVGGIG) is repeat 1. Residues 83–686 (GAGVGGLGAG…GVGGLGVGGL (604 aa)) form an 8 X tandem repeats region. 7 repeat units span residues 219–262 (VNGL…AGVL), 263–318 (PGAG…GVPG), 319–393 (VVPG…VPGV), 394–482 (PGVP…VPGV), 483–554 (GVPG…VGGL), 555–619 (VPGV…PGVT), and 620–686 (PGVG…VGGL). Proline 276, proline 345, proline 363, proline 368, proline 441, proline 455, and proline 480 each carry 4-hydroxyproline. 4-hydroxyproline is present on residues proline 576, proline 635, and proline 720. Cysteine 739 and cysteine 745 are disulfide-bonded.

It belongs to the elastin family. The polymeric elastin chains are cross-linked together into an extensible 3D network. In terms of processing, elastin is formed through the cross-linking of its soluble precursor tropoelastin. Cross-linking is initiated through the action of lysyl oxidase on exposed lysines to form allysine. Subsequent spontaneous condensation reactions with other allysine or unmodified lysine residues result in various bi-, tri-, and tetrafunctional cross-links. The most abundant cross-links in mature elastin fibers are lysinonorleucine, allysine aldol, desmosine, and isodesmosine. Post-translationally, hydroxylated on proline residues. Hydroxylation on proline residues within the sequence motif, GXPG, is most likely to be 4-hydroxy as this fits the requirement for 4-hydroxylation in vertebrates.

The protein localises to the secreted. The protein resides in the extracellular space. Its subcellular location is the extracellular matrix. Functionally, major structural protein of tissues such as aorta and nuchal ligament, which must expand rapidly and recover completely. The sequence is that of Elastin (ELN) from Gallus gallus (Chicken).